Reading from the N-terminus, the 674-residue chain is Probable copper-transporting P-type ATPase B (674 aa).

Positions 1-22 (MNHSNQMHHDNHESHNHHSGHA) are disordered. Residues 7–16 (MHHDNHESHN) show a composition bias toward basic and acidic residues. A run of 6 helical transmembrane segments spans residues 32–52 (FFVS…MGIN), 57–77 (FTFP…FFYG), 95–115 (GMMT…LYAF), 127–147 (TMDF…GHWI), 284–304 (GYLF…WMLI), and 315–335 (LVTV…PLVT). Asp-367 serves as the catalytic 4-aspartylphosphate intermediate. Residues Asp-565 and Asp-569 each contribute to the Mg(2+) site. A run of 2 helical transmembrane segments spans residues 623–645 (LWWG…AFVG) and 649–671 (SPAV…AFTL).

The protein belongs to the cation transport ATPase (P-type) (TC 3.A.3) family. Type IB subfamily.

The protein localises to the cell membrane. It carries out the reaction Cu(+)(in) + ATP + H2O = Cu(+)(out) + ADP + phosphate + H(+). Involved in copper transport. This chain is Probable copper-transporting P-type ATPase B (copB), found in Staphylococcus epidermidis (strain ATCC 12228 / FDA PCI 1200).